A 1304-amino-acid chain; its full sequence is DNA-directed RNA polymerase subunit beta' (1304 aa).

Positions 60, 62, 75, and 78 each coordinate Zn(2+). Aspartate 541, aspartate 543, and aspartate 545 together coordinate Mg(2+). Residues cysteine 887, cysteine 963, cysteine 970, and cysteine 973 each coordinate Zn(2+).

It belongs to the RNA polymerase beta' chain family. As to quaternary structure, the RNAP catalytic core consists of 2 alpha, 1 beta, 1 beta' and 1 omega subunit. When a sigma factor is associated with the core the holoenzyme is formed, which can initiate transcription. Mg(2+) is required as a cofactor. It depends on Zn(2+) as a cofactor.

It catalyses the reaction RNA(n) + a ribonucleoside 5'-triphosphate = RNA(n+1) + diphosphate. Its function is as follows. DNA-dependent RNA polymerase catalyzes the transcription of DNA into RNA using the four ribonucleoside triphosphates as substrates. In Acidothermus cellulolyticus (strain ATCC 43068 / DSM 8971 / 11B), this protein is DNA-directed RNA polymerase subunit beta'.